The primary structure comprises 124 residues: Small ribosomal subunit protein eS6 (124 aa).

Belongs to the eukaryotic ribosomal protein eS6 family.

In Methanococcus maripaludis (strain C5 / ATCC BAA-1333), this protein is Small ribosomal subunit protein eS6.